Consider the following 345-residue polypeptide: NADH-ubiquinone oxidoreductase chain 2 (345 aa).

The next 9 membrane-spanning stretches (helical) occupy residues 25–45 (HWLL…PLMT), 60–80 (FLTQ…NAWL), 99–119 (TIAI…PEVL), 149–171 (LNTP…GGLN), 178–198 (ILAF…PFSP), 199–219 (QLMI…FLVL), 242–262 (ALSL…GFVP), 282–302 (LALS…IVTL), and 324–344 (LLLS…PLTL).

This sequence belongs to the complex I subunit 2 family. Core subunit of respiratory chain NADH dehydrogenase (Complex I) which is composed of 45 different subunits.

Its subcellular location is the mitochondrion inner membrane. The enzyme catalyses a ubiquinone + NADH + 5 H(+)(in) = a ubiquinol + NAD(+) + 4 H(+)(out). Its function is as follows. Core subunit of the mitochondrial membrane respiratory chain NADH dehydrogenase (Complex I) which catalyzes electron transfer from NADH through the respiratory chain, using ubiquinone as an electron acceptor. Essential for the catalytic activity and assembly of complex I. The sequence is that of NADH-ubiquinone oxidoreductase chain 2 (mt-nd2) from Xenopus laevis (African clawed frog).